Here is an 889-residue protein sequence, read N- to C-terminus: Voltage-gated potassium channel KCNC3 (889 aa).

The interval 1-80 (MLSSVCVWSF…CSGLPAVAMG (80 aa)) is important for normal N-type inactivation. At 1 to 291 (MLSSVCVWSF…EDPYSSRAAR (291 aa)) the chain is on the cytoplasmic side. The disordered stretch occupies residues 10 to 66 (FSGRQGTRKQHSQPAPTPQPPESSPPPLLPPPQQQCAQPGTAASPAGAPLSCGPGGR). Over residues 24 to 42 (APTPQPPESSPPPLLPPPQ) the composition is skewed to pro residues. Positions 159, 165, 186, and 187 each coordinate Zn(2+). Residues 202-231 (DSFEAPDSSGNANANAGGAHDAGLDDEAGA) are disordered. Low complexity predominate over residues 211 to 222 (GNANANAGGAHD). Residues 292-310 (YVAFASLFFILISITTFCL) form a helical membrane-spanning segment. Asn-321 is a glycosylation site (N-linked (GlcNAc...) asparagine). The chain crosses the membrane as a helical span at residues 352-371 (VEGVCVVWFTFEFLMRVTFC). At 372 to 380 (PDKVEFLKS) the chain is on the cytoplasmic side. Residues 381–399 (SLNIIDCVAILPFYLEVGL) form a helical membrane-spanning segment. Residues 413–435 (FLRVVRFVRILRIFKLTRHFVGL) traverse the membrane as a helical; Voltage-sensor segment. Residues 436–448 (RVLGHTLRASTNE) lie on the Cytoplasmic side of the membrane. The helical transmembrane segment at 449–470 (FLLLIIFLALGVLIFATMIYYA) threads the bilayer. Residues Thr-504, Leu-505, Gly-506, and Tyr-507 each coordinate K(+). A Selectivity filter motif is present at residues 504–509 (TLGYGD). Residues 519–540 (LVGALCALAGVLTIAMPVPVIV) form a helical membrane-spanning segment. The Cytoplasmic segment spans residues 541-889 (NNFGMYYSLA…FPSRHSSPAV (349 aa)). Disordered regions lie at residues 557–627 (PKKK…LLRG), 691–834 (IDQP…PQSL), and 852–889 (TLGFPLSLPPRLATGNGGRECPRDPGLPFPSRHSSPAV). Residue Arg-626 is modified to Omega-N-methylarginine. Phosphoserine is present on residues Ser-697 and Ser-702. Positions 748–764 (SQAPPASCPTSTPTQQP) are enriched in low complexity. Thr-759 carries the post-translational modification Phosphothreonine. Basic residues predominate over residues 794 to 808 (HRSHQPPGKHQRGGR).

The protein belongs to the potassium channel family. C (Shaw) (TC 1.A.1.2) subfamily. Kv3.3/KCNC3 sub-subfamily. Homotetramer. Heterotetramer with KCNC1. Interacts (via C-terminus) with HAX1; this interaction modulates channel gating. Identified in a complex with ACTR3, a subunit of the Arp2/3 complex; this interaction is indirect and depends on the presence of HAX1. In terms of processing, N-glycosylated. In terms of tissue distribution, detected on Purkinje cells in the cerebellum molecular layer (at protein level).

Its subcellular location is the cell membrane. The protein localises to the presynaptic cell membrane. The protein resides in the perikaryon. It localises to the cell projection. It is found in the axon. Its subcellular location is the dendrite. The protein localises to the dendritic spine membrane. The protein resides in the cytoplasm. It localises to the cell cortex. It is found in the cytoskeleton. The catalysed reaction is K(+)(in) = K(+)(out). Its function is as follows. Voltage-gated potassium channel that plays an important role in the rapid repolarization of fast-firing brain neurons. The channel opens in response to the voltage difference across the membrane, forming a potassium-selective channel through which potassium ions pass in accordance with their electrochemical gradient. The channel displays rapid activation and inactivation kinetics. It plays a role in the regulation of the frequency, shape and duration of action potentials in Purkinje cells. Required for normal survival of cerebellar neurons, probably via its role in regulating the duration and frequency of action potentials that in turn regulate the activity of voltage-gated Ca(2+) channels and cellular Ca(2+) homeostasis. Required for normal motor function. Plays a role in the reorganization of the cortical actin cytoskeleton and the formation of actin veil structures in neuronal growth cones via its interaction with HAX1 and the Arp2/3 complex. The chain is Voltage-gated potassium channel KCNC3 from Rattus norvegicus (Rat).